Consider the following 131-residue polypeptide: Metalloproteinase inhibitor (131 aa).

The first 29 residues, 1 to 29, serve as a signal peptide directing secretion; sequence MVRKRALGLAGSALTLVLGAVGFTAPAQA. 2 cysteine pairs are disulfide-bonded: Cys-33–Cys-39 and Cys-93–Cys-98.

Functionally, inhibits microbial metallo-proteinases, such as thermolysin, but not serine, thiol, or carboxyl proteinases. In Streptomyces nigrescens, this protein is Metalloproteinase inhibitor (smpI).